A 28-amino-acid chain; its full sequence is Expansin-B1 (28 aa).

In terms of domain architecture, Expansin-like CBD spans Met-11–Gly-28.

This sequence belongs to the expansin family. Expansin B subfamily.

It localises to the secreted. It is found in the cell wall. Its subcellular location is the membrane. Functionally, may cause loosening and extension of plant cell walls by disrupting non-covalent bonding between cellulose microfibrils and matrix glucans. The polypeptide is Expansin-B1 (Pseudotsuga menziesii (Douglas-fir)).